The sequence spans 368 residues: Protein mab-21-like (368 aa).

The protein belongs to the mab-21 family.

The protein is Protein mab-21-like of Drosophila pseudoobscura pseudoobscura (Fruit fly).